The primary structure comprises 63 residues: Protein DsrB (63 aa).

It belongs to the DsrB family.

The chain is Protein DsrB from Yersinia enterocolitica serotype O:8 / biotype 1B (strain NCTC 13174 / 8081).